The primary structure comprises 1865 residues: Endoribonuclease Dicer (1865 aa).

The region spanning 41–213 is the Helicase ATP-binding domain; sequence LLEAALEHNT…DLEEKIQNLE (173 aa). Residue 54–61 participates in ATP binding; sequence LNTGSGKT. Residues 161-164 carry the DECH box motif; that stretch reads DECH. A disordered region spans residues 397-417; sequence SWSDSEDDDEDEEAEAKEKTE. Acidic residues predominate over residues 400 to 411; it reads DSEDDDEDEEAE. The Helicase C-terminal domain maps to 419 to 588; sequence NFPSPFTNIL…SAECNDFELE (170 aa). The 93-residue stretch at 616–708 folds into the Dicer dsRNA-binding fold domain; sequence AIGHVNRYCA…MPVGKETVKY (93 aa). Positions 713–732 are disordered; sequence DLHDEEETSVPGRPGSTKRR. A PAZ domain is found at 881-1028; the sequence is KFMEDIEKSE…LVPELCAIHP (148 aa). 2 stretches are compositionally biased toward polar residues: residues 1111-1128 and 1192-1201; these read GTSSDSNHTAPESCSMEV and STQTTTSVSV. Disordered regions lie at residues 1111–1142 and 1190–1259; these read GTSSDSNHTAPESCSMEVSQPPEGAPNTPDEK and DLST…DCRS. Positions 1240 to 1252 are enriched in low complexity; sequence SETATSTPAPSET. An RNase III 1 domain is found at 1262–1385; it reads AGPAWDSPKT…TDKWDSDENK (124 aa). Residues Glu-1298, Asp-1377, and Asp-1380 each coordinate Mg(2+). The disordered stretch occupies residues 1373–1417; that stretch reads KSSTDKWDSDENKDLANGKASDDEDEDDDDEPEEAEVEPSKEDVN. Positions 1374-1388 are enriched in basic and acidic residues; the sequence is SSTDKWDSDENKDLA. Residues 1394 to 1409 are compositionally biased toward acidic residues; it reads DDEDEDDDDEPEEAEV. An RNase III 2 domain is found at 1609 to 1767; sequence FLNFESKINY…LAGAIYMDSG (159 aa). Residues Glu-1648, Asp-1753, and Glu-1756 each coordinate Mg(2+). Residues 1792-1857 form the DRBM domain; that stretch reads VPRSPVRELL…ARRALRSLKA (66 aa).

This sequence belongs to the helicase family. Dicer subfamily. Component of the RISC loading complex (RLC), or micro-RNA (miRNA) loading complex (miRLC), which is composed of dicer1, ago2 and tarbp2; dicer1 and tarbp2 are required to process precursor miRNAs (pre-miRNAs) to mature miRNAs and then load them onto ago2. Note that the trimeric RLC/miRLC is also referred to as RISC. Mg(2+) serves as cofactor. It depends on Mn(2+) as a cofactor.

The protein localises to the cytoplasm. The catalysed reaction is Endonucleolytic cleavage to 5'-phosphomonoester.. Its function is as follows. Double-stranded RNA (dsRNA) endoribonuclease playing a central role in short dsRNA-mediated post-transcriptional gene silencing. Cleaves naturally occurring long dsRNAs and short hairpin pre-microRNAs (miRNA) into fragments of twenty-one to twenty-three nucleotides with 3' overhang of two nucleotides, producing respectively short interfering RNAs (siRNA) and mature microRNAs. SiRNAs and miRNAs serve as guide to direct the RNA-induced silencing complex (RISC) to complementary RNAs to degrade them or prevent their translation. Gene silencing mediated by siRNAs, also called RNA interference, controls the elimination of transcripts from mobile and repetitive DNA elements of the genome but also the degradation of exogenous RNA of viral origin for instance. The miRNA pathway on the other side is a mean to specifically regulate the expression of target genes. The polypeptide is Endoribonuclease Dicer (dicer1) (Danio rerio (Zebrafish)).